A 720-amino-acid polypeptide reads, in one-letter code: Pro-neuregulin-3, membrane-bound isoform (720 aa).

Over 1–360 the chain is Extracellular; sequence MSEGAAAASP…MESEEVYQRQ (360 aa). Disordered regions lie at residues 28–48, 119–223, and 246–280; these read AAAA…AAEP, SSFP…AMPS, and PFQD…TTYS. The segment covering 34–44 has biased composition (gly residues); the sequence is AGGGPDGGGEG. A compositionally biased stretch (low complexity) spans 127–148; sequence TTTTTTSTTSPATPSAGGAASS. The span at 149–163 shows a compositional bias: polar residues; sequence RTPNRISTRLTTITR. Low complexity-rich tracts occupy residues 187–205 and 250–271; these read TAAP…SSST and AASS…TSTS. In terms of domain architecture, EGF-like spans 286 to 329; sequence HFKPCRDKDLAYCLNDGECFVIETLTGSHKHCRCKEGYQGVRCD. Cystine bridges form between cysteine 290–cysteine 304, cysteine 298–cysteine 317, and cysteine 319–cysteine 328. A helical transmembrane segment spans residues 361–381; it reads VLSISCIIFGIVIVGMFCAAF. The Cytoplasmic segment spans residues 382–720; sequence YFKSKKQAKQ…EIQRDSALTK (339 aa). The interval 451 to 481 is disordered; sequence PQSFPEVPSPDRGSQSVKHHRSLSSCCSPGQ.

This sequence belongs to the neuregulin family. As to quaternary structure, interacts with ERBB4. Proteolytic cleavage close to the plasma membrane on the external face leads to the release of the soluble growth factor form. Post-translationally, extensive glycosylation precedes the proteolytic cleavage. Isoform 3 is glycosylated. Highly expressed in most regions of the brain with the exception of corpus callosum. Expressed at lower level in testis. Not detected in heart, placenta, lung, liver, skeletal muscle, kidney, pancreas, spleen, thymus, prostate, ovary, small intestine, colon and peripheral blood leukocytes.

The protein resides in the cell membrane. It localises to the secreted. Functionally, direct ligand for the ERBB4 tyrosine kinase receptor. Binding results in ligand-stimulated tyrosine phosphorylation and activation of the receptor. Does not bind to the EGF receptor, ERBB2 or ERBB3 receptors. May be a survival factor for oligodendrocytes. This is Pro-neuregulin-3, membrane-bound isoform (NRG3) from Homo sapiens (Human).